The sequence spans 512 residues: MQQQKPLEGAQLVIMTIALSLATFMQVLDSTIANVAIPTIAGNLGSSLSQGTWVITSFGVANAISIPLTGWLAKRVGEVKLFLWSTIAFAIASWACGVSSSLNMLIFFRVIQGIVAGPLIPLSQSLLLNNYPPAKRSIALALWSMTVIVAPICGPILGGYISDNYHWGWIFFINVPIGVAVVLMTLQTLRGRETRTERRRIDAVGLALLVIGIGSLQIMLDRGKELDWFSSQEIIILTVVAVVAICFLIVWELTDDNPIVDLSLFKSRNFTIGCLCISLAYMLYFGAIVLLPQLLQEVYGYTATWAGLASAPVGIIPVILSPIIGRFAHKLDMRRLVTFSFIMYAVCFYWRAYTFEPGMDFGASAWPQFIQGFAVACFFMPLTTITLSGLPPERLAAASSLSNFTRTLAGSIGTSITTTMWTNRESMHHAQLTESVNPFNPNAQAMYSQLEGLGMTQQQASGWIAQQITNQGLIISANEIFWMSAGIFLVLLGLVWFAKPPFGAGGGGGGAH.

Over 1–12 (MQQQKPLEGAQL) the chain is Cytoplasmic. The helical transmembrane segment at 13 to 38 (VIMTIALSLATFMQVLDSTIANVAIP) threads the bilayer. At 39–51 (TIAGNLGSSLSQG) the chain is on the extracellular side. A helical transmembrane segment spans residues 52 to 72 (TWVITSFGVANAISIPLTGWL). Topologically, residues 73–81 (AKRVGEVKL) are cytoplasmic. The helical transmembrane segment at 82–100 (FLWSTIAFAIASWACGVSS) threads the bilayer. Residues 101–109 (SLNMLIFFR) lie on the Extracellular side of the membrane. Residues 110 to 128 (VIQGIVAGPLIPLSQSLLL) traverse the membrane as a helical segment. The Cytoplasmic segment spans residues 129 to 136 (NNYPPAKR). Residues 137 to 159 (SIALALWSMTVIVAPICGPILGG) form a helical membrane-spanning segment. Residues 160–164 (YISDN) are Extracellular-facing. Residues 165–189 (YHWGWIFFINVPIGVAVVLMTLQTL) traverse the membrane as a helical segment. The Cytoplasmic segment spans residues 190–202 (RGRETRTERRRID). A helical membrane pass occupies residues 203-223 (AVGLALLVIGIGSLQIMLDRG). Residues 224 to 233 (KELDWFSSQE) are Extracellular-facing. Residues 234–249 (IIILTVVAVVAICFLI) form a helical membrane-spanning segment. Over 250–271 (VWELTDDNPIVDLSLFKSRNFT) the chain is Cytoplasmic. A helical transmembrane segment spans residues 272–295 (IGCLCISLAYMLYFGAIVLLPQLL). Over 296 to 305 (QEVYGYTATW) the chain is Extracellular. A helical membrane pass occupies residues 306 to 329 (AGLASAPVGIIPVILSPIIGRFAH). The Cytoplasmic segment spans residues 330–335 (KLDMRR). A helical transmembrane segment spans residues 336–355 (LVTFSFIMYAVCFYWRAYTF). The Extracellular portion of the chain corresponds to 356 to 363 (EPGMDFGA). Residues 364–387 (SAWPQFIQGFAVACFFMPLTTITL) traverse the membrane as a helical segment. Topologically, residues 388 to 407 (SGLPPERLAAASSLSNFTRT) are cytoplasmic. A helical membrane pass occupies residues 408–428 (LAGSIGTSITTTMWTNRESMH). Over 429–481 (HAQLTESVNPFNPNAQAMYSQLEGLGMTQQQASGWIAQQITNQGLIISANEIF) the chain is Extracellular. The helical transmembrane segment at 482–504 (WMSAGIFLVLLGLVWFAKPPFGA) threads the bilayer. Over 505 to 512 (GGGGGGAH) the chain is Cytoplasmic.

This sequence belongs to the major facilitator superfamily. EmrB family. In terms of assembly, part of the tripartite efflux system EmrAB-TolC, which is composed of an inner membrane transporter, EmrB, a periplasmic membrane fusion protein, EmrA, and an outer membrane component, TolC. The complex forms a large protein conduit and can translocate molecules across both the inner and outer membranes. Interacts with EmrA.

The protein localises to the cell inner membrane. Functionally, part of the tripartite efflux system EmrAB-TolC, which confers resistance to antibiotics. This chain is Multidrug export protein EmrB (emrB), found in Escherichia coli O157:H7.